The sequence spans 502 residues: Xylan O-acetyltransferase 13 (502 aa).

Over 1-53 (MWSALFSHLREVHKRSGVKEEKLIMKSPPAAGEAGCHKPQATATNKMTVLQSP) the chain is Cytoplasmic. The chain crosses the membrane as a helical; Signal-anchor for type II membrane protein span at residues 54-76 (LGLRTILTSLVAFFIVVSSVSLL). Residues 77 to 502 (FDRGQDAQAQ…EFLYAYIMHK (426 aa)) lie on the Lumenal side of the membrane. 4 disulfide bridges follow: C152–C203, C174–C239, C183–C483, and C399–C479. N-linked (GlcNAc...) asparagine glycans are attached at residues N153, N163, N189, and N209. The GDS motif motif lies at 226 to 228 (GDS). Catalysis depends on S228, which acts as the Nucleophile. N255, N267, N372, N401, and N442 each carry an N-linked (GlcNAc...) asparagine glycan. Residue D478 is the Proton donor of the active site. Positions 478–481 (DCTH) match the DXXH motif motif. H481 functions as the Proton acceptor in the catalytic mechanism.

This sequence belongs to the PC-esterase family. TBL subfamily.

It localises to the golgi apparatus membrane. In terms of biological role, xylan acetyltransferase required for 2-O- and 3-O-monoacetylation of xylosyl residues in xylan. Catalyzes the 2-O-acetylation of xylan, followed by nonenzymatic acetyl migration to the O-3 position, resulting in products that are monoacetylated at both O-2 and O-3 positions. The chain is Xylan O-acetyltransferase 13 from Oryza sativa subsp. japonica (Rice).